The primary structure comprises 459 residues: GTPase Der (459 aa).

2 consecutive EngA-type G domains span residues Phe3–Val167 and Ile188–Asn363. GTP contacts are provided by residues Gly9–Ser16, Asp56–Leu60, Asn119–Glu122, Gly194–Ser201, Asp241–Leu245, and Asn306–Asp309. The 85-residue stretch at Arg364–Ala448 folds into the KH-like domain.

The protein belongs to the TRAFAC class TrmE-Era-EngA-EngB-Septin-like GTPase superfamily. EngA (Der) GTPase family. In terms of assembly, associates with the 50S ribosomal subunit.

Its function is as follows. GTPase that plays an essential role in the late steps of ribosome biogenesis. The protein is GTPase Der of Rhodopseudomonas palustris (strain TIE-1).